The following is a 355-amino-acid chain: UDP-N-acetylglucosamine--N-acetylmuramyl-(pentapeptide) pyrophosphoryl-undecaprenol N-acetylglucosamine transferase (355 aa).

Residues 15-17, Asn-127, Arg-163, Ser-191, Ile-244, 263-268, and Gln-288 each bind UDP-N-acetyl-alpha-D-glucosamine; these read TGG and ALTVSE.

This sequence belongs to the glycosyltransferase 28 family. MurG subfamily.

The protein resides in the cell inner membrane. The enzyme catalyses di-trans,octa-cis-undecaprenyl diphospho-N-acetyl-alpha-D-muramoyl-L-alanyl-D-glutamyl-meso-2,6-diaminopimeloyl-D-alanyl-D-alanine + UDP-N-acetyl-alpha-D-glucosamine = di-trans,octa-cis-undecaprenyl diphospho-[N-acetyl-alpha-D-glucosaminyl-(1-&gt;4)]-N-acetyl-alpha-D-muramoyl-L-alanyl-D-glutamyl-meso-2,6-diaminopimeloyl-D-alanyl-D-alanine + UDP + H(+). It participates in cell wall biogenesis; peptidoglycan biosynthesis. Its function is as follows. Cell wall formation. Catalyzes the transfer of a GlcNAc subunit on undecaprenyl-pyrophosphoryl-MurNAc-pentapeptide (lipid intermediate I) to form undecaprenyl-pyrophosphoryl-MurNAc-(pentapeptide)GlcNAc (lipid intermediate II). The sequence is that of UDP-N-acetylglucosamine--N-acetylmuramyl-(pentapeptide) pyrophosphoryl-undecaprenol N-acetylglucosamine transferase from Escherichia coli (strain 55989 / EAEC).